A 174-amino-acid chain; its full sequence is Small t antigen (174 aa).

The residue at position 1 (Met-1) is an N-acetylmethionine; by host. In terms of domain architecture, J spans 12–75; sequence QLMDLLGLER…VKYAHQPDFG (64 aa). The C4-type; atypical zinc finger occupies 103-116; that stretch reads CAKKMSANCICLLC. The H1C3-type; atypical zinc-finger motif lies at 122–143; it reads HENRKLYRKDPLVWVDCYCFDC.

Interacts with host PPP2R1A; the interaction inhibits PP2A activity.

It is found in the host cytoplasm. The protein localises to the host nucleus. Functionally, promotes efficient viral genome replication by accelerating both G1 and S phase progression of the cell cycle. Inhibits host PP2A by binding to the A subunit, thereby displacing lower affinity regulatory B subunit. Inactivation of PP2A in turn results in the transactivation of cyclin A and cyclin D1 promoters. Late during the infection cycle, ST may induce dephosphorylation of host eIF4E-binding protein EIF4EBP1 leading to the inhibition of cap-dependent translation. May establish and maintain high levels of viral genomes during persistent infection in cell culture. The sequence is that of Small t antigen from Simian virus 40 (SV40).